Here is a 329-residue protein sequence, read N- to C-terminus: MKFSKVSLLAASASVALSAPVAVTVTQHVHQAATVVVQGIVRVENGQTLTTFITKGTQTASASPVATTSAPIVVANAQVDSIATSVIQESAVVAESATFEESSTETSEAFSTATATIQAVQTSASATQDDVTTTLTSSTQPTSTTTPTTTTTSPTTTTSPTTTASPTTTASPTTATTTQSTASSTQSSSSDFSTSMVNEHNTKRALHKDTGSLTWSDTLATYAQNYADSYDCSGNLVHSGGPYGENLALGYGTTGSVDAWYNEITSYDYSNPGFSESAGHFTQVVWKGTSEVGCGLKSCGGEWGDYIICSYKAAGNVIGEFADNVMPLA.

The N-terminal stretch at 1-18 (MKFSKVSLLAASASVALS) is a signal peptide. A compositionally biased stretch (polar residues) spans 122 to 131 (TSASATQDDV). Residues 122 to 197 (TSASATQDDV…SSSDFSTSMV (76 aa)) are disordered. Positions 132-190 (TTTLTSSTQPTSTTTPTTTTTSPTTTTSPTTTASPTTTASPTTATTTQSTASSTQSSSS) are enriched in low complexity. The SCP domain occupies 197–311 (VNEHNTKRAL…EWGDYIICSY (115 aa)).

Belongs to the CRISP family. Post-translationally, O-glycosylated.

The protein localises to the secreted. Secreted protein required for efficient export of lipids such as acetylated sterols. Acts in detoxification of hydrophobic compounds. The polypeptide is Protein PRY2 (PRY2) (Saccharomyces cerevisiae (strain ATCC 204508 / S288c) (Baker's yeast)).